The primary structure comprises 414 residues: 3-oxoacyl-[acyl-carrier-protein] synthase 2 (414 aa).

Residues 4–411 (NIRVVITGMG…GHNAVLVFKK (408 aa)) enclose the Ketosynthase family 3 (KS3) domain. Catalysis depends on for beta-ketoacyl synthase activity residues C165, H304, and H341.

This sequence belongs to the thiolase-like superfamily. Beta-ketoacyl-ACP synthases family.

It catalyses the reaction a fatty acyl-[ACP] + malonyl-[ACP] + H(+) = a 3-oxoacyl-[ACP] + holo-[ACP] + CO2. The catalysed reaction is (9Z)-hexadecenoyl-[ACP] + malonyl-[ACP] + H(+) = 3-oxo-(11Z)-octadecenoyl-[ACP] + holo-[ACP] + CO2. Its pathway is lipid metabolism; fatty acid biosynthesis. Its function is as follows. Involved in the type II fatty acid elongation cycle. Catalyzes the elongation of a wide range of acyl-ACP by the addition of two carbons from malonyl-ACP to an acyl acceptor. Can efficiently catalyze the conversion of palmitoleoyl-ACP (cis-hexadec-9-enoyl-ACP) to cis-vaccenoyl-ACP (cis-octadec-11-enoyl-ACP), an essential step in the thermal regulation of fatty acid composition. This is 3-oxoacyl-[acyl-carrier-protein] synthase 2 (fabF) from Staphylococcus aureus (strain MRSA252).